The following is a 423-amino-acid chain: Glutamate-1-semialdehyde 2,1-aminomutase (423 aa).

Lys-258 carries the N6-(pyridoxal phosphate)lysine modification.

The protein belongs to the class-III pyridoxal-phosphate-dependent aminotransferase family. HemL subfamily. Pyridoxal 5'-phosphate serves as cofactor.

It is found in the cytoplasm. The catalysed reaction is (S)-4-amino-5-oxopentanoate = 5-aminolevulinate. Its pathway is porphyrin-containing compound metabolism; protoporphyrin-IX biosynthesis; 5-aminolevulinate from L-glutamyl-tRNA(Glu): step 2/2. The chain is Glutamate-1-semialdehyde 2,1-aminomutase from Pyrobaculum arsenaticum (strain DSM 13514 / JCM 11321 / PZ6).